Consider the following 550-residue polypeptide: 2-succinyl-5-enolpyruvyl-6-hydroxy-3-cyclohexene-1-carboxylate synthase (550 aa).

The protein belongs to the TPP enzyme family. MenD subfamily. In terms of assembly, homodimer. Mg(2+) is required as a cofactor. The cofactor is Mn(2+). Thiamine diphosphate serves as cofactor.

The enzyme catalyses isochorismate + 2-oxoglutarate + H(+) = 5-enolpyruvoyl-6-hydroxy-2-succinyl-cyclohex-3-ene-1-carboxylate + CO2. It functions in the pathway quinol/quinone metabolism; 1,4-dihydroxy-2-naphthoate biosynthesis; 1,4-dihydroxy-2-naphthoate from chorismate: step 2/7. The protein operates within quinol/quinone metabolism; menaquinone biosynthesis. Functionally, catalyzes the thiamine diphosphate-dependent decarboxylation of 2-oxoglutarate and the subsequent addition of the resulting succinic semialdehyde-thiamine pyrophosphate anion to isochorismate to yield 2-succinyl-5-enolpyruvyl-6-hydroxy-3-cyclohexene-1-carboxylate (SEPHCHC). The sequence is that of 2-succinyl-5-enolpyruvyl-6-hydroxy-3-cyclohexene-1-carboxylate synthase from Desulfitobacterium hafniense (strain DSM 10664 / DCB-2).